The chain runs to 323 residues: tRNA dimethylallyltransferase (323 aa).

18-25 (GPTASGKT) is a binding site for ATP. 20–25 (TASGKT) serves as a coordination point for substrate. The segment at 44-47 (DSAL) is interaction with substrate tRNA.

It belongs to the IPP transferase family. Monomer. Mg(2+) is required as a cofactor.

The catalysed reaction is adenosine(37) in tRNA + dimethylallyl diphosphate = N(6)-dimethylallyladenosine(37) in tRNA + diphosphate. In terms of biological role, catalyzes the transfer of a dimethylallyl group onto the adenine at position 37 in tRNAs that read codons beginning with uridine, leading to the formation of N6-(dimethylallyl)adenosine (i(6)A). The chain is tRNA dimethylallyltransferase from Blochmanniella floridana.